Reading from the N-terminus, the 185-residue chain is Ribosome-recycling factor (185 aa).

This sequence belongs to the RRF family.

The protein resides in the cytoplasm. Its function is as follows. Responsible for the release of ribosomes from messenger RNA at the termination of protein biosynthesis. May increase the efficiency of translation by recycling ribosomes from one round of translation to another. This chain is Ribosome-recycling factor, found in Enterococcus faecalis (strain ATCC 700802 / V583).